Consider the following 90-residue polypeptide: MAHKKAGGSSRNGRDSAGRRLGVKLYGGQLAVAGNIIVRQRGTTWWPGQNVGMGRDHTLFALTDGHVTFKKGLKGRTYISVLPANLEAAE.

It belongs to the bacterial ribosomal protein bL27 family.

This chain is Large ribosomal subunit protein bL27, found in Paracoccus denitrificans (strain Pd 1222).